Here is a 189-residue protein sequence, read N- to C-terminus: Probable chorismate pyruvate-lyase (189 aa).

R77, L115, and E174 together coordinate substrate.

This sequence belongs to the UbiC family.

It localises to the cytoplasm. It catalyses the reaction chorismate = 4-hydroxybenzoate + pyruvate. The protein operates within cofactor biosynthesis; ubiquinone biosynthesis. Removes the pyruvyl group from chorismate, with concomitant aromatization of the ring, to provide 4-hydroxybenzoate (4HB) for the ubiquinone pathway. In Shewanella sp. (strain MR-7), this protein is Probable chorismate pyruvate-lyase.